Consider the following 152-residue polypeptide: Glutaredoxin-related protein 5, mitochondrial (152 aa).

The transit peptide at 1-31 (MSASLSRAAAALLRWGRSAGGGGLPGAGVRA) directs the protein to the mitochondrion. The region spanning 38–141 (AEQLDALVKK…EELKKLGIRS (104 aa)) is the Glutaredoxin domain. Position 55 (lysine 55) interacts with glutathione. Residue lysine 55 is modified to N6-succinyllysine. Position 63 (cysteine 63) interacts with [2Fe-2S] cluster. Glutathione-binding positions include 93-97 (RQGIK), isoleucine 105, and 118-119 (CD). Position 151 is a phosphoserine (serine 151).

It belongs to the glutaredoxin family. Monothiol subfamily. Homodimer. Interacts with ISCU. Interacts with BOLA1. Detected in bone, liver, muscle and kidney.

The protein localises to the mitochondrion matrix. In terms of biological role, monothiol glutaredoxin involved in mitochondrial iron-sulfur (Fe/S) cluster transfer. Receives 2Fe/2S clusters from scaffold protein ISCU and mediates their transfer to apoproteins, to the 4Fe/FS cluster biosynthesis machinery, or export from mitochondrion. Required for normal regulation of hemoglobin synthesis by the iron-sulfur protein ACO1. This chain is Glutaredoxin-related protein 5, mitochondrial (Glrx5), found in Mus musculus (Mouse).